The chain runs to 251 residues: MLITDTLSPQAFEEALRAKGDFYHIHHPYHIAMHNGNATREQIQGWVANRFYYQTTIPLKDAAIMANCPDAQTRRKWVQRILDHDGSHGEDGGIEAWLRLGEAVGLSRDDLLSERHVLPGVRFAVDAYLNFARRACWQEAACSSLTELFAPQIHQSRLDSWPQHYPWIKEEGYFYFRSRLSQANRDVEHGLALAKAYCDSAEKQNRMLEILQFKLDILWSMLDAMTMAYALQRPPYHTVTDKAAWHTTRLV.

Belongs to the PqqC family.

It catalyses the reaction 6-(2-amino-2-carboxyethyl)-7,8-dioxo-1,2,3,4,7,8-hexahydroquinoline-2,4-dicarboxylate + 3 O2 = pyrroloquinoline quinone + 2 H2O2 + 2 H2O + H(+). Its pathway is cofactor biosynthesis; pyrroloquinoline quinone biosynthesis. Ring cyclization and eight-electron oxidation of 3a-(2-amino-2-carboxyethyl)-4,5-dioxo-4,5,6,7,8,9-hexahydroquinoline-7,9-dicarboxylic-acid to PQQ. The polypeptide is Pyrroloquinoline-quinone synthase (Klebsiella pneumoniae subsp. pneumoniae (strain ATCC 700721 / MGH 78578)).